We begin with the raw amino-acid sequence, 297 residues long: Protoheme IX farnesyltransferase 1 (297 aa).

9 helical membrane-spanning segments follow: residues valine 23–valine 43, tryptophan 45–valine 65, leucine 93–phenylalanine 113, leucine 117–leucine 137, isoleucine 145–glycine 165, proline 171–isoleucine 191, leucine 216–histidine 236, leucine 241–tyrosine 261, and isoleucine 277–leucine 297.

The protein belongs to the UbiA prenyltransferase family. Protoheme IX farnesyltransferase subfamily.

The protein resides in the cell inner membrane. The catalysed reaction is heme b + (2E,6E)-farnesyl diphosphate + H2O = Fe(II)-heme o + diphosphate. The protein operates within porphyrin-containing compound metabolism; heme O biosynthesis; heme O from protoheme: step 1/1. Converts heme B (protoheme IX) to heme O by substitution of the vinyl group on carbon 2 of heme B porphyrin ring with a hydroxyethyl farnesyl side group. The chain is Protoheme IX farnesyltransferase 1 from Pseudomonas putida (strain GB-1).